The primary structure comprises 584 residues: DNA mismatch repair protein MutL (584 aa).

This sequence belongs to the DNA mismatch repair MutL/HexB family.

This protein is involved in the repair of mismatches in DNA. It is required for dam-dependent methyl-directed DNA mismatch repair. May act as a 'molecular matchmaker', a protein that promotes the formation of a stable complex between two or more DNA-binding proteins in an ATP-dependent manner without itself being part of a final effector complex. This is DNA mismatch repair protein MutL from Buchnera aphidicola subsp. Acyrthosiphon pisum (strain Tuc7).